Reading from the N-terminus, the 358-residue chain is Testis-specific serine/threonine-protein kinase 2 (358 aa).

One can recognise a Protein kinase domain in the interval 12 to 272 (YIVGINLGKG…IDEILSHSWL (261 aa)). ATP is bound by residues 18–26 (LGKGSYAKV) and Lys41. Catalysis depends on Asp136, which acts as the Proton acceptor. 2 stretches are compositionally biased toward basic and acidic residues: residues 296 to 315 (DCKL…DHKL) and 329 to 358 (NEDR…KAST). A disordered region spans residues 296–358 (DCKLDTRPGS…SGAEVEKAST (63 aa)).

The protein belongs to the protein kinase superfamily. CAMK Ser/Thr protein kinase family. In terms of assembly, interacts with TSSK1B. Interacts with HSP90; this interaction stabilizes TSSK2. The cofactor is Mg(2+). In terms of processing, autophosphorylated. Post-translationally, ubiquitinated; HSP90 activity negatively regulates ubiquitination and degradation. As to expression, testis-specific. Expressed only in the spermatids postmeiotically at the final stages of cytodifferentiation in the seminiferous tubules (at protein level). Not detected in released sperms in the lumen of the seminiferous tubules. Also present in the epididymal sperm (at protein level).

It localises to the cytoplasm. The protein resides in the cytoskeleton. The protein localises to the microtubule organizing center. It is found in the centrosome. Its subcellular location is the centriole. It localises to the cytoplasmic vesicle. The protein resides in the secretory vesicle. The protein localises to the acrosome. The catalysed reaction is L-seryl-[protein] + ATP = O-phospho-L-seryl-[protein] + ADP + H(+). The enzyme catalyses L-threonyl-[protein] + ATP = O-phospho-L-threonyl-[protein] + ADP + H(+). Activated by phosphorylation on Thr-174, potentially by autophosphorylation. Functionally, testis-specific serine/threonine-protein kinase required during spermatid development. Phosphorylates 'Ser-281' of TSKS and SPAG16. Involved in the late stages of spermatogenesis, during the reconstruction of the cytoplasm. During spermatogenesis, required for the transformation of a ring-shaped structure around the base of the flagellum originating from the chromatoid body. The polypeptide is Testis-specific serine/threonine-protein kinase 2 (Tssk2) (Mus musculus (Mouse)).